We begin with the raw amino-acid sequence, 57 residues long: Bowman-Birk type proteinase inhibitor B4 (57 aa).

4 disulfide bridges follow: C6-C55, C12-C17, C26-C33, and C30-C47.

It belongs to the Bowman-Birk serine protease inhibitor family. Expressed in bulb (at protein level).

Functionally, serine protease inhibitor. Inhibits trypsin (Ki = 110 nM) and very weakly inhibits chymotrypsin (Ki =1200 nM). Does not inhibit bacterial subtilisin. This is Bowman-Birk type proteinase inhibitor B4 from Hyacinthus orientalis (Common hyacinth).